The sequence spans 218 residues: MGVTVLQPYPLEKSGAQTIDFLLKRVVALGAVPAGQFLVDCETYSSNPQLGPPKTVHILHNSEQPASVFSILDTGTKQIPLVTDGLFDLLMTRIAPAYTSKKQTKIESKGQRFEFGDFVIKLGSVTMSQNFKGVLVEVEYRPCLVPGSCWELMREFLQGFLGSNVSNSMPAYFTQRSSINPNHSKANEIYQPIDTINQYLEHFTNYRKQTMAPVGVRP.

Belongs to the Mediator complex subunit 20 family. Component of the Mediator complex.

The protein resides in the nucleus. Component of the Mediator complex, a coactivator involved in the regulated transcription of nearly all RNA polymerase II-dependent genes. Mediator functions as a bridge to convey information from gene-specific regulatory proteins to the basal RNA polymerase II transcription machinery. Mediator is recruited to promoters by direct interactions with regulatory proteins and serves as a scaffold for the assembly of a functional preinitiation complex with RNA polymerase II and the general transcription factors. The protein is Mediator of RNA polymerase II transcription subunit 20 (MED20) of Anopheles gambiae (African malaria mosquito).